A 299-amino-acid chain; its full sequence is Zinc import ATP-binding protein ZnuC (299 aa).

The ABC transporter domain occupies 13–228 (VSLANAGVQR…PEYMRLFGGT (216 aa)). 45 to 52 (GPNGSGKS) contributes to the ATP binding site.

The protein belongs to the ABC transporter superfamily. Zinc importer (TC 3.A.1.15.5) family. The complex is composed of two ATP-binding proteins (ZnuC), two transmembrane proteins (ZnuB) and a solute-binding protein (ZnuA).

The protein resides in the cell inner membrane. The catalysed reaction is Zn(2+)(out) + ATP(in) + H2O(in) = Zn(2+)(in) + ADP(in) + phosphate(in) + H(+)(in). Part of the ABC transporter complex ZnuABC involved in zinc import. Responsible for energy coupling to the transport system. In Agrobacterium fabrum (strain C58 / ATCC 33970) (Agrobacterium tumefaciens (strain C58)), this protein is Zinc import ATP-binding protein ZnuC.